The following is a 246-amino-acid chain: Serine protease 1 (246 aa).

An N-terminal signal peptide occupies residues 1–15; sequence MSALLILALVGAAVA. A propeptide spans 16 to 23 (activation peptide); the sequence is FPLEDDDK. One can recognise a Peptidase S1 domain in the interval 24 to 244; that stretch reads IVGGYTCPEH…FVGWIQDTIA (221 aa). Cystine bridges form between Cys-30-Cys-160, Cys-48-Cys-64, Cys-132-Cys-233, Cys-139-Cys-206, Cys-171-Cys-185, and Cys-196-Cys-220. Residue His-63 is the Charge relay system of the active site. The Ca(2+) site is built by Glu-75, Asn-77, Val-80, and Glu-85. Catalysis depends on Asp-107, which acts as the Charge relay system. The active-site Charge relay system is Ser-200.

This sequence belongs to the peptidase S1 family. As to quaternary structure, interacts with SERPINA1. Ca(2+) is required as a cofactor.

It is found in the secreted. The protein localises to the extracellular space. It catalyses the reaction Preferential cleavage: Arg-|-Xaa, Lys-|-Xaa.. This chain is Serine protease 1, found in Rattus norvegicus (Rat).